Reading from the N-terminus, the 378-residue chain is Ribosomal RNA large subunit methyltransferase G (378 aa).

The protein belongs to the methyltransferase superfamily. RlmG family.

It is found in the cytoplasm. The catalysed reaction is guanosine(1835) in 23S rRNA + S-adenosyl-L-methionine = N(2)-methylguanosine(1835) in 23S rRNA + S-adenosyl-L-homocysteine + H(+). Specifically methylates the guanine in position 1835 (m2G1835) of 23S rRNA. The sequence is that of Ribosomal RNA large subunit methyltransferase G from Salmonella dublin (strain CT_02021853).